Reading from the N-terminus, the 338-residue chain is Elongation factor Ts, mitochondrial (338 aa).

The N-terminal 42 residues, 1–42 (MSPSIAMFTLTPNARALASKTSKMDLIKNLRERTGAPIVDVK), are a transit peptide targeting the mitochondrion.

It belongs to the EF-Ts family.

The protein localises to the mitochondrion. In terms of biological role, associates with the EF-Tu.GDP complex and induces the exchange of GDP to GTP. It remains bound to the aminoacyl-tRNA.EF-Tu.GTP complex up to the GTP hydrolysis stage on the ribosome. The protein is Elongation factor Ts, mitochondrial of Ostreococcus tauri.